A 118-amino-acid chain; its full sequence is Myotrophin (118 aa).

3 ANK repeats span residues 1–30, 34–65, and 67–98; these read MSDKEFMWALKNGDLDEVKDYVAKGEDVNR, GGRKPLHYAADCGQLEILEFLLLKGADINAPD, and HNITPLLSAVYEGHVSCVKLLLSKGADKTVKG.

This sequence belongs to the myotrophin family.

It is found in the cytoplasm. Its subcellular location is the nucleus. The protein resides in the perinuclear region. Regulates NF-kappa-B transcription factor activity. Promotes growth of cardiomyocytes, but not cardiomyocyte proliferation. Promotes cardiac muscle hypertrophy. Plays a role in the regulation of the growth of actin filaments. Inhibits the activity of the F-actin-capping protein complex. The polypeptide is Myotrophin (MTPN) (Gallus gallus (Chicken)).